The chain runs to 739 residues: MWELVETVRSMLNSLHDGEISVSAYDTAWVARVPALDGSNTPQFPMCLNWIMNNQLEDGSWGDRDLFLTYDRICSALACAIALKTWNTGDKIVHKALEFIRKTMPKMELEDSTHMPIGFEIVFPAMIEEAMALELDIDYTAPVLQTIYAERKKKLERIPMNVVQNYPTTLLHSLEGLHKTIDWDKVIKLQSPDGSLLFSPASTACALMHTGNEKCLQYLNNLVKRFNCAVPNVYPVDLFEHLWIVDRLQRLGISRYFTQEIKSALDYVYRYWTDKGIAWARGSPVQDADDTSMAFRLLRSHGYDISPDAFKTFQEGDSFVCFSGQAGQAVTGMYNLYRASQVMFPGETILEEAGSFARKFLEGKRQENQLYDKWIISKDLPGEVEFALDNPMHARLERLATRRYIDQYAADDVWIGKSLYRMPFVNNPIFLELAKADFNMCRALHRKEFQQLERWYDESSLSMFKGFSRSKLEQTFYSAAATIFEPELSPARLIWSQCWFLSLGINEYFDYQGSTKELEDLINNVERWNVNSLGNCSAKVKILFVELYNIVQNHSKQGFLYQGRSIGGALREIWKTWLSSLLQRTKWKMSDNYPTLEEYLKASHSSIEPAVRSTVYFVGETLATGDLKDSAICQMMNTASRLVQDTHTDKVDSSLNSITIYLEENPQLTESEALSQVQALANKNMQKLLYETLQPGALPQACKQLFLNAARIMNVFPGTNKVQAKLSNHVKRVLSQPVL.

Lysine 154 is a substrate binding site. 2 residues coordinate Mg(2+): aspartate 287 and aspartate 289. Residues 287 to 290 (DADD) carry the DXDD motif motif. Lysine 373 is a substrate binding site.

Belongs to the terpene synthase family. It depends on Mg(2+) as a cofactor.

The enzyme catalyses (2E,6E,10E)-geranylgeranyl diphosphate = (+)-copalyl diphosphate. It participates in secondary metabolite biosynthesis; terpenoid biosynthesis. In terms of biological role, monofunctional diterpene synthase converting geranylgeranyl diphosphate to copalyl diphosphate. This chain is Copalyl diphosphate synthase 1 (CPS1), found in Selaginella moellendorffii (Spikemoss).